The primary structure comprises 887 residues: MATAAPSPSSPLRPEDLLSDSSEPPGLNQVSSEVTSQLYTSLHLSRQAEATARAQLYLAPTSSPPNEGLDSLAQELSRSLSVGLENNLKKKDGSKHIFEMESVRGQLQTMLHTSRDTAYRTGSERREEDSFDSDSTATLLNTRPLQDLSPSSSAPALEELFPRYTSLRPGPPTNPPDFQGLRDALDAELTRRKHCERHIQSLQTRVLELQQQLAVAVAADHKKDLMIEQLDKTLARVVEGWNRHEAERTEVLRGLQEERQAAELTRSKQQETVTRLEQSLSEAMEALSREQEGARLQQREKEALEEERQALTLRLEVEQQQCRTLQEERDEARAGQLSEHRKLEALQVALQEERQAWIKQEHQLKERLQALQEEGQAQLEREKGNSQREAQAAWETQQQFALLQTEVRRLEGDLDTVRRERDALQLEMSLVQARYESQRIQMESELAVQLEQRVTERLAEAQENSLRQAASLRDHHRKQLQELSGQHQQELAAQLAQFKVEMADREERQQQVAQDYELRLAREQARVRDLKSGNQQLEEQRAELVERLQAMLQAHWEEANQLLSTTLLPPNPQAPLAEPSSPGPLEPEKGERRTWAMPPMAVALKPVLQQSREVKGDVPGAPSVLCSTSPDLSLLLGPPFQNQNSFQPLEPKPDVTPPTAGPFSALEAFTDDHRAERPFPEEDPGSDGDARLPPASQLEGLKNFLQQLLETAPQSNGNPSADLLLPKAGSRAVSSWEEAPQVPRLPPPVHKTKVPLAMASSLFRVHGLPSTNLQGSGLSTGSPEKDGLNLVDVSELLRLYQARGWGALPAEDLLLYLKRLEHSGTDGQGELVPRRNTDSRLGETTRKEIPSQAVPRRLASVPKTEKPARKKSGHPGPSMRSRGGIWR.

The tract at residues 1–34 (MATAAPSPSSPLRPEDLLSDSSEPPGLNQVSSEV) is disordered. Serine 81 is modified (phosphoserine). Disordered regions lie at residues 110–153 (MLHT…PSSS), 465–486 (SLRQ…LSGQ), 566–591 (TLLP…EKGE), and 636–695 (LGPP…LPPA). The segment covering 113-128 (TSRDTAYRTGSERREE) has biased composition (basic and acidic residues). Polar residues predominate over residues 133-153 (SDSTATLLNTRPLQDLSPSSS). Residues 191–557 (RRKHCERHIQ…LQAMLQAHWE (367 aa)) are a coiled coil. The tract at residues 360–887 (QEHQLKERLQ…SMRSRGGIWR (528 aa)) is required for centrosome localization. A compositionally biased stretch (basic and acidic residues) spans 670–680 (TDDHRAERPFP). Phosphoserine is present on serine 782. A disordered region spans residues 824–887 (GTDGQGELVP…SMRSRGGIWR (64 aa)). Residues 832-849 (VPRRNTDSRLGETTRKEI) show a composition bias toward basic and acidic residues.

As to quaternary structure, interacts with LYST.

It is found in the cytoplasm. The protein resides in the cytoskeleton. It localises to the microtubule organizing center. Its subcellular location is the centrosome. The protein localises to the centriole. In terms of biological role, required for centriole duplication. Inhibition of centriole duplication leading to defects in cytokinesis. The sequence is that of Centrobin (Cntrob) from Mus musculus (Mouse).